We begin with the raw amino-acid sequence, 522 residues long: Amphoterin-induced protein 2 (522 aa).

An N-terminal signal peptide occupies residues 1–39 (MSLRVHTLPTLLGAVVRPGCRELLCLLMITVAVGPGASG). The LRRNT domain maps to 40–68 (VCPTACICATDIVSCTNKHLSKVPGNLFR). Residues 40–398 (VCPTACICAT…RSHAHEAFNT (359 aa)) are Extracellular-facing. 2 cysteine pairs are disulfide-bonded: cysteine 41–cysteine 47 and cysteine 45–cysteine 54. LRR repeat units lie at residues 69–90 (LMKRLDLSYNRIGLLDSEWIPV), 94–115 (KLNTLILRHNNITSISTGSFST), 118–139 (NLKCLDLSSNKLKTVKNAVFQE), 142–163 (VLEVLLLYNNHISYLDPSAFGG), 166–187 (QLQKLYLSGNFLTQFPMDLYVG), and 193–214 (ELMFLDVSYNRIPSMPMHHINL). Asparagine 104 carries N-linked (GlcNAc...) asparagine glycosylation. An LRRCT domain is found at 228 to 284 (NPFVCDCSLYSLLVFWYRRHFSSVMDFKNDYTCRLWSDSRHSRQVLLLQDSFMNCSD). 2 cysteine pairs are disulfide-bonded: cysteine 232-cysteine 260 and cysteine 234-cysteine 282. Residues asparagine 281, asparagine 288, asparagine 345, asparagine 373, asparagine 381, and asparagine 384 are each glycosylated (N-linked (GlcNAc...) asparagine). An Ig-like C2-type domain is found at 289 to 379 (GSFRALGFIH…RLLNETVDVT (91 aa)). An intrachain disulfide couples cysteine 310 to cysteine 363. A helical transmembrane segment spans residues 399 to 419 (AFTTLAACVASIVLVLLYLYL). Topologically, residues 420-522 (TPCPCKCKTK…FSDTPFVAST (103 aa)) are cytoplasmic. Residues 501–522 (RGKSDSDSVNSVFSDTPFVAST) are disordered.

It belongs to the immunoglobulin superfamily. AMIGO family. In terms of assembly, binds itself as well as AMIGO1 and AMIGO3.

Its subcellular location is the cell membrane. The protein resides in the nucleus. Functionally, required for depolarization-dependent survival of cultured cerebellar granule neurons. May mediate homophilic as well as heterophilic cell-cell interaction with AMIGO1 or AMIGO3. May contribute to signal transduction through its intracellular domain. The sequence is that of Amphoterin-induced protein 2 from Pongo abelii (Sumatran orangutan).